The primary structure comprises 281 residues: Bifunctional protein FolD (281 aa).

NADP(+) is bound by residues 165–167 (GRG), threonine 192, and valine 233.

The protein belongs to the tetrahydrofolate dehydrogenase/cyclohydrolase family. Homodimer.

The catalysed reaction is (6R)-5,10-methylene-5,6,7,8-tetrahydrofolate + NADP(+) = (6R)-5,10-methenyltetrahydrofolate + NADPH. It catalyses the reaction (6R)-5,10-methenyltetrahydrofolate + H2O = (6R)-10-formyltetrahydrofolate + H(+). It functions in the pathway one-carbon metabolism; tetrahydrofolate interconversion. Functionally, catalyzes the oxidation of 5,10-methylenetetrahydrofolate to 5,10-methenyltetrahydrofolate and then the hydrolysis of 5,10-methenyltetrahydrofolate to 10-formyltetrahydrofolate. The sequence is that of Bifunctional protein FolD from Mycobacteroides abscessus (strain ATCC 19977 / DSM 44196 / CCUG 20993 / CIP 104536 / JCM 13569 / NCTC 13031 / TMC 1543 / L948) (Mycobacterium abscessus).